We begin with the raw amino-acid sequence, 54 residues long: Califin-B (54 aa).

Residues cysteine 25 and cysteine 53 are joined by a disulfide bond. Leucine amide is present on leucine 36.

The protein belongs to the molluscan ELH family. As to quaternary structure, this protein consists of a large 36-residue subunit, bound by a single disulfide-bond to a small 18-residue subunit.

The protein resides in the secreted. In terms of biological role, injected in sexually mature animals califin B excites LB and LC cells of the abdominal ganglion and cause egg-laying. This Aplysia californica (California sea hare) protein is Califin-B.